We begin with the raw amino-acid sequence, 270 residues long: MAIVLRTVDFSETSLIVTLLTKDLGRISALAKGARRLKGPFEGSLDLLSVCAITLIDKPGDTLDLLTESKLRRRFRGAQRSLERLHAGYYIAEMLRLLVDDDDPHRELFDMTLSAMGMIDGEGHVAKTLLAFDAQCLRLLGHSPATQRCTVCGRDAERSRRRASFSLVGGGVVCENCRPSQSHLMTASWDALDALRELASEPELPPSTIDADTDNPSQPPSTAFPIGRLFPAMTPAIYRDLRGLLNRTLESLVGQTPRMQPFLPDKLDSL.

Residues 202 to 221 (PELPPSTIDADTDNPSQPPS) form a disordered region.

It belongs to the RecO family.

Its function is as follows. Involved in DNA repair and RecF pathway recombination. This chain is DNA repair protein RecO, found in Rhodopirellula baltica (strain DSM 10527 / NCIMB 13988 / SH1).